A 160-amino-acid chain; its full sequence is Endoribonuclease YbeY (160 aa).

Zn(2+) contacts are provided by His-125, His-129, and His-135.

Belongs to the endoribonuclease YbeY family. Zn(2+) is required as a cofactor.

It localises to the cytoplasm. Single strand-specific metallo-endoribonuclease involved in late-stage 70S ribosome quality control and in maturation of the 3' terminus of the 16S rRNA. The sequence is that of Endoribonuclease YbeY from Leuconostoc mesenteroides subsp. mesenteroides (strain ATCC 8293 / DSM 20343 / BCRC 11652 / CCM 1803 / JCM 6124 / NCDO 523 / NBRC 100496 / NCIMB 8023 / NCTC 12954 / NRRL B-1118 / 37Y).